The following is a 127-amino-acid chain: Small ribosomal subunit protein uS12 (127 aa).

Asp89 carries the post-translational modification 3-methylthioaspartic acid. The interval 101-127 (ALDTSGVAGRTQRRSKYGAKRPKEAKK) is disordered. Residues 111 to 127 (TQRRSKYGAKRPKEAKK) show a composition bias toward basic residues.

The protein belongs to the universal ribosomal protein uS12 family. Part of the 30S ribosomal subunit. Contacts proteins S8 and S17. May interact with IF1 in the 30S initiation complex.

Its function is as follows. With S4 and S5 plays an important role in translational accuracy. Functionally, interacts with and stabilizes bases of the 16S rRNA that are involved in tRNA selection in the A site and with the mRNA backbone. Located at the interface of the 30S and 50S subunits, it traverses the body of the 30S subunit contacting proteins on the other side and probably holding the rRNA structure together. The combined cluster of proteins S8, S12 and S17 appears to hold together the shoulder and platform of the 30S subunit. This chain is Small ribosomal subunit protein uS12, found in Flavobacterium psychrophilum (strain ATCC 49511 / DSM 21280 / CIP 103535 / JIP02/86).